A 92-amino-acid chain; its full sequence is Acylphosphatase (92 aa).

The region spanning 5-92 is the Acylphosphatase-like domain; that stretch reads QVQLFVRGRV…GDFFDFRITD (88 aa). Residues Arg20 and Asn38 contribute to the active site.

The protein belongs to the acylphosphatase family.

It catalyses the reaction an acyl phosphate + H2O = a carboxylate + phosphate + H(+). The protein is Acylphosphatase (acyP) of Sorangium cellulosum (strain So ce56) (Polyangium cellulosum (strain So ce56)).